Here is a 250-residue protein sequence, read N- to C-terminus: MIVIPAVDIRQGKCVRLSQGRADAQTVYSDDPAAMAAKWEGMGAARIHVVDLDGAFEKTPKNLGAIKKILETVKKPVQVGGGIRDLATMETYLDLGVSNIIIGTEAIRNPEMVKDACKRFPGKIIVGIDAKEGMVAVEGWTETTSVRAVDLARSFEDAGVAAINFTDIHRDGMQTGPNIEQTRAFAQAISIPVVASGGVSTIKDIKAVKTLAKDGVVGVITGRALYVGTLDLAEAVSEAMEGVDPDYNPF.

Asp-8 acts as the Proton acceptor in catalysis. Asp-129 acts as the Proton donor in catalysis.

This sequence belongs to the HisA/HisF family.

The protein resides in the cytoplasm. The catalysed reaction is 1-(5-phospho-beta-D-ribosyl)-5-[(5-phospho-beta-D-ribosylamino)methylideneamino]imidazole-4-carboxamide = 5-[(5-phospho-1-deoxy-D-ribulos-1-ylimino)methylamino]-1-(5-phospho-beta-D-ribosyl)imidazole-4-carboxamide. The protein operates within amino-acid biosynthesis; L-histidine biosynthesis; L-histidine from 5-phospho-alpha-D-ribose 1-diphosphate: step 4/9. This Desulfatibacillum aliphaticivorans protein is 1-(5-phosphoribosyl)-5-[(5-phosphoribosylamino)methylideneamino] imidazole-4-carboxamide isomerase.